The sequence spans 1215 residues: Endoplasmic reticulum transmembrane helix translocase (1215 aa).

The Cytoplasmic segment spans residues 1 to 27 (MTKKSFVSSPIVRDSTLLVPKSLIAKP). The helical transmembrane segment at 28–43 (YVLPFFPLYATFAQLY) threads the bilayer. Residues 44-56 (FQQYDRYIKGPEW) are Lumenal-facing. Residues 57 to 76 (TFVYLGTLVSLNILVMLMPA) form a helical membrane-spanning segment. Residues 77 to 188 (WNVKIKAKFN…ENSFDIPIPT (112 aa)) are Cytoplasmic-facing. The interval 156-185 (KIGDFQKCKGHSGDLTHLKRLYGENSFDIP) is A-domain; part 1. Residues 189–216 (FMELFKEHAVAPLFVFQVFCVALWLLDE) form a helical membrane-spanning segment. Position 217 (Phe-217) is a topological domain, lumenal. The chain crosses the membrane as a helical span at residues 218 to 246 (WYYSLFNLFMIISMEAAAVFQRLTALKEF). Residues 247 to 395 (RTMGIKPYTI…IYSAERVSVD (149 aa)) lie on the Cytoplasmic side of the membrane. Residues 250–390 (GIKPYTINVF…LVRVMIYSAE (141 aa)) form an A-domain; part 2 region. Ser-324 carries the post-translational modification Phosphoserine. Residues 396–425 (NKEALMFILFLLIFAVIASWYVWVEGTKMG) traverse the membrane as a helical segment. Residues 426 to 427 (RI) are Lumenal-facing. The next 2 membrane-spanning stretches (helical) occupy residues 428–442 (QSKL…ITSV) and 446–464 (ELPM…ALAK). At 465-971 (FYVYCTEPFR…APFTSKLANV (507 aa)) the chain is on the cytoplasmic side. The tract at residues 466–495 (YVYCTEPFRIPFAGRIDVCCFDKTGTLTGE) is P-domain; part 1. Asp-487 functions as the 4-aspartylphosphate intermediate in the catalytic mechanism. Asp-487 and Thr-489 together coordinate Mg(2+). Residues 487–489 (DKT), Phe-582, Arg-634, Asp-699, and 816–820 (DGTND) each bind ATP. The segment at 497–674 (LVFEGLAGIS…FNGFLIFHCP (178 aa)) is N-domain. Residues 677-837 (DDAIETIKML…HVGIALLNGT (161 aa)) form a P-domain; part 2 region. Asp-816 contributes to the Mg(2+) binding site. The segment at 838–953 (EEGLKKLGEQ…DAQGDEAPAL (116 aa)) is arm-like. Ser-936 is subject to Phosphoserine. Residues 954 to 969 (KLGDASCAAPFTSKLA) form a P-domain; part 3 region. Residues 972 to 1011 (SAVTNIIRQGRCALVNTIQMYKILALNCLISAYSLSIIYM) traverse the membrane as a helical segment. Topologically, residues 1012–1017 (AGVKFG) are lumenal. The helical transmembrane segment at 1018-1035 (DGQATVSGLLLSVCFLSI) threads the bilayer. At 1036–1055 (SRGKPLEKLSKQRPQSGIFN) the chain is on the cytoplasmic side. A helical membrane pass occupies residues 1056 to 1084 (VYIMGSILSQFAVHIATLVYITTEIYKLE). Residues 1085-1099 (PREPQVDLEKEFAPS) lie on the Lumenal side of the membrane. A helical membrane pass occupies residues 1100-1121 (LLNTGIFIIQLVQQVSTFAVNY). The Cytoplasmic portion of the chain corresponds to 1122 to 1133 (QGEPFRENIRSN). A helical transmembrane segment spans residues 1134–1151 (KGMYYGLLGVTGLALASA). Residues 1152–1168 (TEFLPELNEAMKFVPMT) lie on the Lumenal side of the membrane. The helical transmembrane segment at 1169 to 1197 (DDFKIKLTLTLLLDFFGSWGVEHFFKFFF) threads the bilayer. Over 1198–1215 (MDDKPSDISVQQVKIASK) the chain is Cytoplasmic.

The protein belongs to the cation transport ATPase (P-type) (TC 3.A.3) family. Type V subfamily. Requires Mg(2+) as cofactor.

The protein localises to the endoplasmic reticulum membrane. The catalysed reaction is [protein]-with a C-terminal TM segment(out) + ATP + H2O = [protein]-with a C-terminal TM segment(in) + ADP + phosphate + H(+). With respect to regulation, the ATPase activity is stimulated by phosphatidylinositol 4-phosphate (PI4P). In terms of biological role, endoplasmic reticulum translocase required to remove mitochondrial transmembrane proteins mistargeted to the endoplasmic reticulum. Acts as a dislocase that mediates the ATP-dependent extraction of mislocalized mitochondrial transmembrane proteins from the endoplasmic reticulum membrane. Specifically binds mitochondrial tail-anchored transmembrane proteins: has an atypically large substrate-binding pocket that recognizes and binds moderately hydrophobic transmembranes with short hydrophilic lumenal domains. This chain is Endoplasmic reticulum transmembrane helix translocase, found in Saccharomyces cerevisiae (strain ATCC 204508 / S288c) (Baker's yeast).